A 776-amino-acid chain; its full sequence is MASTPTLNLSITTPFVRTKIPAKISLPACSWLDRSSSRHVELNHKFCRKLELKVAMCRASLDVQQVRDEVYSNAQPHELVDKKIEERVKYVKNLLSTMDDGRINWSAYDTAWISLIKDFEGRDCPQFPSTLERIAENQLPDGSWGDKDFDCSYDRIINTLACVVALTTWNVHPEINQKGIRYLKENMRKLEETPTVLMTCAFEVVFPALLKKARNLGIHDLPYDMPIVKEICKIGDEKLARIPKKMMEKETTSLMYAAEGVENLDWERLLKLRTPENGSFLSSPAATVVAFMHTKDEDCLRYIKYLLNKFNGGAPNVYPVDLWSRLWATDRLQRLGISRYFESEIKDLLSYVHSYWTDIGVYCTRDSKYADIDDTSMGFRLLRVQGYNMDANVFKYFQKDDKFVCLGGQMNGSATATYNLYRAAQYQFPGEQILEDARKFSQQFLQESIDTNNLLDKWVISPHIPEEMRFGMEMTWYSCLPRIEASYYLQHYGATEDVWLGKTFFRMEEISNENYRELAILDFSKCQAQHQTEWIHMQEWYESNNVKEFGISRKDLLFAYFLAAASIFETERAKERILWARSKIICKMVKSFLEKETGSLEHKIAFLTGSGDKGNGPVNNAMATLHQLLGEFDGYISIQLENAWAAWLTKLEQGEANDGELLATTINICGGRVNQDTLSHNEYKALSDLTNKICHNLAQIQNDKGDEIKDSKRSERDKEVEQDMQALAKLVFEESDLERSIKQTFLAVVRTYYYGAYIAAEKIDVHMFKVLFKPVG.

Residues 1–17 (MASTPTLNLSITTPFVR) constitute a chloroplast transit peptide. K238 serves as a coordination point for substrate. Mg(2+) is bound by residues D371 and D373. Residues 371-374 (DIDD) carry the DXDD motif motif. K457 contributes to the substrate binding site.

The protein belongs to the terpene synthase family. Requires Mg(2+) as cofactor. As to expression, present in both leaves and flowers, with higher levels in leaves.

The protein localises to the plastid. It is found in the chloroplast. It catalyses the reaction peregrinol diphosphate = (2E,6E,10E)-geranylgeranyl diphosphate + H2O. The protein operates within secondary metabolite biosynthesis; terpenoid biosynthesis. Its function is as follows. Involved in the biosynthesis of labdane-type diterpenoid including marrubiin and other labdane-related furanoid diterpenoids with potential applications as anti-diabetics, analgesics or vasorelaxants. Terpene synthase that produces peregrinol diphosphate from geranylgeranyl diphosphate (GGPP). This Marrubium vulgare (White horehound) protein is Peregrinol diphosphate synthase CPS1, chloroplastic.